Consider the following 441-residue polypeptide: Acetyltransferase TRI7 (441 aa).

7 helical membrane-spanning segments follow: residues 14-34, 75-95, 158-178, 306-326, 336-356, 377-397, and 421-441; these read GILY…LIII, SLTL…LVLT, IWFI…LDII, IAFV…FCWG, LAFF…QALC, LVGY…YLYH, and TATM…GIEV.

It belongs to the wax synthase family.

The protein resides in the membrane. It functions in the pathway sesquiterpene biosynthesis; trichothecene biosynthesis. Its function is as follows. Acetyltransferase; part of the core gene cluster that mediates the biosynthesis of trichothecenes, a very large family of chemically related bicyclic sesquiterpene compounds acting as mycotoxins, including T2-toxin. The biosynthesis of trichothecenes begins with the cyclization of farnesyl diphosphate to trichodiene and is catalyzed by the trichodiene synthase TRI5. Trichodiene undergoes a series of oxygenations catalyzed by the cytochrome P450 monooxygenase TRI4. TRI4 controls the addition of four oxygens at C-2, C-3, C-11, and the C-12, C-13-epoxide to form the intermediate isotrichotriol. Isotrichotriol then undergoes a non-enzymatic isomerization and cyclization to form isotrichodermol. During this process, the oxygen at the C-2 position becomes the pyran ring oxygen and the hydroxyl group at C-11 is lost. More complex type A trichothecenes are built by modifying isotrichodermol through a series of paired hydroxylation and acetylation or acylation steps. Isotrichodermol is converted to isotrichodermin by the acetyltransferase TRI101. TRI101 encodes a C-3 transacetylase that acts as a self-protection or resistance factor during biosynthesis and that the presence of a free C-3 hydroxyl group is a key component of Fusarium trichothecene phytotoxicity. A second hydroxyl group is added to C-15 by the trichothecene C-15 hydroxylase TRI11, producing 15-decalonectrin, which is then acetylated by TRI3, producing calonectrin. A third hydroxyl group is added at C-4 by the cytochrome P450 monooxygenase TRI13, converting calonectrin to 3,15-diacetoxyspirpenol, which is subsequently acetylated by the acetyltransferase TRI7. A fourth hydroxyl group is added to C-8 by the cytochrome P450 monooxygenase TRI1, followed by the addition of an isovaleryl moiety by TRI16. Finally, the acetyl group is removed from the C-3 position by the trichothecene C-3 esterase TRI8 to produce T-2 toxin. The protein is Acetyltransferase TRI7 of Fusarium sporotrichioides.